Consider the following 467-residue polypeptide: Glutamate--tRNA ligase (467 aa).

A 'HIGH' region motif is present at residues 9–19; it reads PSPTGYLHIGG. Residues 237–241 carry the 'KMSKS' region motif; sequence KLSKR. Lys-240 is an ATP binding site.

It belongs to the class-I aminoacyl-tRNA synthetase family. Glutamate--tRNA ligase type 1 subfamily. As to quaternary structure, monomer.

The protein localises to the cytoplasm. It catalyses the reaction tRNA(Glu) + L-glutamate + ATP = L-glutamyl-tRNA(Glu) + AMP + diphosphate. Its function is as follows. Catalyzes the attachment of glutamate to tRNA(Glu) in a two-step reaction: glutamate is first activated by ATP to form Glu-AMP and then transferred to the acceptor end of tRNA(Glu). This is Glutamate--tRNA ligase from Stenotrophomonas maltophilia (strain R551-3).